The primary structure comprises 418 residues: 3-isopropylmalate dehydratase large subunit (418 aa).

Residues C298, C358, and C361 each contribute to the [4Fe-4S] cluster site.

It belongs to the aconitase/IPM isomerase family. LeuC type 2 subfamily. Heterodimer of LeuC and LeuD. [4Fe-4S] cluster is required as a cofactor.

It carries out the reaction (2R,3S)-3-isopropylmalate = (2S)-2-isopropylmalate. It participates in amino-acid biosynthesis; L-leucine biosynthesis; L-leucine from 3-methyl-2-oxobutanoate: step 2/4. Catalyzes the isomerization between 2-isopropylmalate and 3-isopropylmalate, via the formation of 2-isopropylmaleate. The protein is 3-isopropylmalate dehydratase large subunit of Thermoanaerobacter sp. (strain X514).